Reading from the N-terminus, the 260-residue chain is MMQSITSKALVLYNRNFREDDKLVKIFTEQAGKRMFFVKHATNSKLSPVIQPLTLANLLMKVNDDGLSYIQDYQDVQPFTRINSDLFIMAYATYVAALADASIPDSQPDAALFAFLTKTLELMEEGLDHEILTNIFEVQILSRFGVSLNFHECVFCHRTGLPFDFSFKFSGVLCPDHYREDDRRCHLHPNIPFLLDQFQAVEYSTLETISLKAEIKQQLREFIDQIYDDYVGIHLKSKKFIDSLGDWGSILKDKENKESI.

This sequence belongs to the RecO family.

Involved in DNA repair and RecF pathway recombination. The chain is DNA repair protein RecO from Streptococcus gordonii (strain Challis / ATCC 35105 / BCRC 15272 / CH1 / DL1 / V288).